We begin with the raw amino-acid sequence, 31 residues long: VFCRFNGQQCTSDGQCCYGKCRTAFMGKICM.

3 cysteine pairs are disulfide-bonded: Cys3/Cys17, Cys10/Cys21, and Cys16/Cys30.

As to expression, expressed by the venom gland.

The protein localises to the secreted. Acts as a neurotoxin. This Phoneutria nigriventer (Brazilian armed spider) protein is U13-ctenitoxin-Pn1b.